The chain runs to 337 residues: MTVRVGVVGTGVMGADHVRTLTGGVAGARVVAVSDADQGRGRAVAAEAGDEVVFHADPVDLIGDAGVDAVVVASPDHTHEALATACVEAGKPVLCEKPLAATAADCLRIVAHEVAKGRRLVQAGYMRRFDPSYVDMKRALDAGSIGDPVLVHCVHRNARALHFFTPEMPFTSAAVHEFDVVRWLLSSEIVRVTVHRTRSSSRAAARLADPRLLVLETAAGVTVDVEVFVNAQYGYDVRCELVGELGTVSLALPSTTVVRAGGAEGVAVHADFRTRFAEAYRLQLQAWVDAAARGEACGPSAWDGYAATAVAEACLRAQEDGTPVEVELADKPALYGT.

This sequence belongs to the Gfo/Idh/MocA family. As to quaternary structure, homotetramer.

The catalysed reaction is myo-inositol + NAD(+) = scyllo-inosose + NADH + H(+). In terms of biological role, involved in the oxidation of myo-inositol (MI) to 2-keto-myo-inositol (2KMI or 2-inosose). The polypeptide is Inositol 2-dehydrogenase 1 (Saccharopolyspora erythraea (strain ATCC 11635 / DSM 40517 / JCM 4748 / NBRC 13426 / NCIMB 8594 / NRRL 2338)).